The primary structure comprises 338 residues: uncharacterized protein (338 aa).

Residues 1 to 72 are disordered; that stretch reads MASPPILSRE…LNPVEDYDSK (72 aa). Residues 24–38 show a composition bias toward polar residues; that stretch reads GGNSEVNIDPSASSS. Basic and acidic residues predominate over residues 49–58; it reads ADTKIDPHLL. Residues 59–68 show a composition bias toward acidic residues; sequence EEDDLNPVED.

It is found in the cytoplasm. It localises to the nucleus. This is an uncharacterized protein from Schizosaccharomyces pombe (strain 972 / ATCC 24843) (Fission yeast).